The following is a 440-amino-acid chain: General transcription factor IIE subunit 1 (440 aa).

An N-acetylalanine modification is found at Ala2. Residues 14–104 form the HTH TFE/IIEalpha-type domain; the sequence is LKRLAKYVIR…NYRTLVNVVK (91 aa). N6-acetyllysine is present on Lys67. Zn(2+)-binding residues include Cys129, Cys132, Cys154, and Cys157. The C4-type zinc finger occupies 129-157; the sequence is CPVCCSTFTDLEANQLFDPMTGTFRCTFC. At Ser268 the chain carries Phosphoserine. Low complexity predominate over residues 333–353; it reads SSVTAGSVGAAAPVTAANGSD. Residues 333–395 form a disordered region; the sequence is SSVTAGSVGA…EEFEEVADDP (63 aa). Composition is skewed to acidic residues over residues 354-364 and 381-393; these read SESETSESDDD and EDEEDEEFEEVAD.

This sequence belongs to the TFIIE alpha subunit family. In terms of assembly, tetramer of two alpha and two beta chains. Interacts with TAF6/TAFII80. Interacts with ATF7IP. Interacts with SND1. Part of TBP-based Pol II pre-initiation complex (PIC), in which Pol II core assembles with general transcription factors and other specific initiation factors including GTF2E1, GTF2E2, GTF2F1, GTF2F2, TCEA1, ERCC2, ERCC3, GTF2H2, GTF2H3, GTF2H4, GTF2H5, GTF2A1, GTF2A2, GTF2B and TBP; this large multi-subunit PIC complex mediates DNA unwinding and targets Pol II core to the transcription start site where the first phosphodiester bond forms.

It localises to the nucleus. Recruits TFIIH to the initiation complex and stimulates the RNA polymerase II C-terminal domain kinase and DNA-dependent ATPase activities of TFIIH. Both TFIIH and TFIIE are required for promoter clearance by RNA polymerase. This is General transcription factor IIE subunit 1 (Gtf2e1) from Mus musculus (Mouse).